Reading from the N-terminus, the 387-residue chain is Anhydro-N-acetylmuramic acid kinase (387 aa).

Gly-17 to Asp-24 provides a ligand contact to ATP.

It belongs to the anhydro-N-acetylmuramic acid kinase family.

It catalyses the reaction 1,6-anhydro-N-acetyl-beta-muramate + ATP + H2O = N-acetyl-D-muramate 6-phosphate + ADP + H(+). The protein operates within amino-sugar metabolism; 1,6-anhydro-N-acetylmuramate degradation. Its pathway is cell wall biogenesis; peptidoglycan recycling. Functionally, catalyzes the specific phosphorylation of 1,6-anhydro-N-acetylmuramic acid (anhMurNAc) with the simultaneous cleavage of the 1,6-anhydro ring, generating MurNAc-6-P. Is required for the utilization of anhMurNAc either imported from the medium or derived from its own cell wall murein, and thus plays a role in cell wall recycling. This chain is Anhydro-N-acetylmuramic acid kinase, found in Burkholderia pseudomallei (strain 1710b).